A 334-amino-acid polypeptide reads, in one-letter code: Transaldolase (334 aa).

The active-site Schiff-base intermediate with substrate is the K136.

This sequence belongs to the transaldolase family. Type 1 subfamily. As to quaternary structure, homodimer.

Its subcellular location is the cytoplasm. The enzyme catalyses D-sedoheptulose 7-phosphate + D-glyceraldehyde 3-phosphate = D-erythrose 4-phosphate + beta-D-fructose 6-phosphate. It functions in the pathway carbohydrate degradation; pentose phosphate pathway; D-glyceraldehyde 3-phosphate and beta-D-fructose 6-phosphate from D-ribose 5-phosphate and D-xylulose 5-phosphate (non-oxidative stage): step 2/3. Functionally, transaldolase is important for the balance of metabolites in the pentose-phosphate pathway. This Nostoc punctiforme (strain ATCC 29133 / PCC 73102) protein is Transaldolase.